Reading from the N-terminus, the 240-residue chain is Probable transcriptional regulatory protein A2cp1_1765 (240 aa).

The protein belongs to the TACO1 family.

It is found in the cytoplasm. The chain is Probable transcriptional regulatory protein A2cp1_1765 from Anaeromyxobacter dehalogenans (strain 2CP-1 / ATCC BAA-258).